The following is a 511-amino-acid chain: Lariat debranching enzyme (511 aa).

Positions 52, 54, 83, and 128 each coordinate a divalent metal cation. The segment at 168–198 is lariat recognition loop; the sequence is SGIYSHGDVEFSHYERPAFAERDVKSAYHVR. The a divalent metal cation site is built by histidine 226, histidine 278, and histidine 280. The segment at 473-511 is disordered; it reads EDDFIIDRGHGSEEPEAKKSRLEEEKKKKKKKIENLKTL. The span at 477–498 shows a compositional bias: basic and acidic residues; it reads IIDRGHGSEEPEAKKSRLEEEK.

It belongs to the lariat debranching enzyme family. Requires Fe(2+) as cofactor. Zn(2+) serves as cofactor. It depends on Mn(2+) as a cofactor.

It is found in the nucleus. Its activity is regulated as follows. Active in presence of diverse metals including Fe(2+), Zn(2+), Mn(2+). Binds two metal cations in two adjacent alpha and beta metal-binding pockets. In terms of biological role, cleaves the 2'-5' phosphodiester linkage at the branch point of lariat intron pre-mRNAs after splicing and converts them into linear molecules that are subsequently degraded. It thereby facilitates ribonucleotide turnover. This chain is Lariat debranching enzyme (dbr-1), found in Caenorhabditis briggsae.